We begin with the raw amino-acid sequence, 426 residues long: Histidine--tRNA ligase (426 aa).

It belongs to the class-II aminoacyl-tRNA synthetase family. As to quaternary structure, homodimer.

It is found in the cytoplasm. It catalyses the reaction tRNA(His) + L-histidine + ATP = L-histidyl-tRNA(His) + AMP + diphosphate + H(+). The polypeptide is Histidine--tRNA ligase (Streptococcus pyogenes serotype M3 (strain ATCC BAA-595 / MGAS315)).